Reading from the N-terminus, the 522-residue chain is 2-isopropylmalate synthase (522 aa).

In terms of domain architecture, Pyruvate carboxyltransferase spans 5–267; the sequence is VIIFDTTLRD…ETGINAKEIH (263 aa). Mn(2+)-binding residues include Asp14, His202, His204, and Asn238. The segment at 392–522 is regulatory domain; it reads QLQQLVVQSD…MQKNRELGGV (131 aa).

It belongs to the alpha-IPM synthase/homocitrate synthase family. LeuA type 1 subfamily. In terms of assembly, homodimer. Requires Mn(2+) as cofactor.

It localises to the cytoplasm. It catalyses the reaction 3-methyl-2-oxobutanoate + acetyl-CoA + H2O = (2S)-2-isopropylmalate + CoA + H(+). The protein operates within amino-acid biosynthesis; L-leucine biosynthesis; L-leucine from 3-methyl-2-oxobutanoate: step 1/4. Catalyzes the condensation of the acetyl group of acetyl-CoA with 3-methyl-2-oxobutanoate (2-ketoisovalerate) to form 3-carboxy-3-hydroxy-4-methylpentanoate (2-isopropylmalate). This Shewanella baltica (strain OS185) protein is 2-isopropylmalate synthase.